We begin with the raw amino-acid sequence, 1289 residues long: DNA-directed RNA polymerase subunit beta (1289 aa).

This sequence belongs to the RNA polymerase beta chain family. In terms of assembly, the RNAP catalytic core consists of 2 alpha, 1 beta, 1 beta' and 1 omega subunit. When a sigma factor is associated with the core the holoenzyme is formed, which can initiate transcription.

It catalyses the reaction RNA(n) + a ribonucleoside 5'-triphosphate = RNA(n+1) + diphosphate. DNA-dependent RNA polymerase catalyzes the transcription of DNA into RNA using the four ribonucleoside triphosphates as substrates. The chain is DNA-directed RNA polymerase subunit beta from Methylacidiphilum infernorum (isolate V4) (Methylokorus infernorum (strain V4)).